We begin with the raw amino-acid sequence, 37 residues long: Large ribosomal subunit protein bL36 (37 aa).

Belongs to the bacterial ribosomal protein bL36 family.

This chain is Large ribosomal subunit protein bL36, found in Nitratidesulfovibrio vulgaris (strain ATCC 29579 / DSM 644 / CCUG 34227 / NCIMB 8303 / VKM B-1760 / Hildenborough) (Desulfovibrio vulgaris).